We begin with the raw amino-acid sequence, 282 residues long: uncharacterized protein (282 aa).

This sequence belongs to the ycf80 family.

It localises to the plastid. The protein localises to the chloroplast. This is an uncharacterized protein from Guillardia theta (Cryptophyte).